The primary structure comprises 274 residues: 2,3,4,5-tetrahydropyridine-2,6-dicarboxylate N-succinyltransferase (274 aa).

Residues arginine 104 and aspartate 141 each contribute to the substrate site.

Belongs to the transferase hexapeptide repeat family. In terms of assembly, homotrimer.

It is found in the cytoplasm. The catalysed reaction is (S)-2,3,4,5-tetrahydrodipicolinate + succinyl-CoA + H2O = (S)-2-succinylamino-6-oxoheptanedioate + CoA. It functions in the pathway amino-acid biosynthesis; L-lysine biosynthesis via DAP pathway; LL-2,6-diaminopimelate from (S)-tetrahydrodipicolinate (succinylase route): step 1/3. The polypeptide is 2,3,4,5-tetrahydropyridine-2,6-dicarboxylate N-succinyltransferase (Shewanella loihica (strain ATCC BAA-1088 / PV-4)).